Here is a 210-residue protein sequence, read N- to C-terminus: Redox-sensing transcriptional repressor Rex (210 aa).

The segment at residues 17 to 56 is a DNA-binding region (H-T-H motif); that stretch reads SYLHLVKKAEADKLEYISGTVIAEELELEPIQVRKDLTIT. 91–96 lines the NAD(+) pocket; that stretch reads GAGSLG.

The protein belongs to the transcriptional regulatory Rex family. Homodimer.

The protein localises to the cytoplasm. In terms of biological role, modulates transcription in response to changes in cellular NADH/NAD(+) redox state. The chain is Redox-sensing transcriptional repressor Rex from Treponema denticola (strain ATCC 35405 / DSM 14222 / CIP 103919 / JCM 8153 / KCTC 15104).